The primary structure comprises 302 residues: Ectoine dioxygenase (302 aa).

Gln128 provides a ligand contact to L-ectoine. Lys134 provides a ligand contact to 2-oxoglutarate. The Fe cation site is built by His145, Asp147, and His246.

The protein belongs to the PhyH family. EctD subfamily. As to quaternary structure, homodimer. It depends on Fe(2+) as a cofactor.

It catalyses the reaction L-ectoine + 2-oxoglutarate + O2 = 5-hydroxyectoine + succinate + CO2. In terms of biological role, involved in the biosynthesis of 5-hydroxyectoine, called compatible solute, which helps organisms to survive extreme osmotic stress by acting as a highly soluble organic osmolyte. Catalyzes the 2-oxoglutarate-dependent selective hydroxylation of L-ectoine to yield (4S,5S)-5-hydroxyectoine. This chain is Ectoine dioxygenase, found in Stutzerimonas stutzeri (strain A1501) (Pseudomonas stutzeri).